The chain runs to 304 residues: Ribonuclease BN (304 aa).

The Zn(2+) site is built by H63, H65, D67, H68, H140, D211, and H269. Residue D67 is the Proton acceptor of the active site.

It belongs to the RNase Z family. RNase BN subfamily. Homodimer. Zn(2+) is required as a cofactor.

Functionally, zinc phosphodiesterase, which has both exoribonuclease and endoribonuclease activities. The protein is Ribonuclease BN of Erwinia tasmaniensis (strain DSM 17950 / CFBP 7177 / CIP 109463 / NCPPB 4357 / Et1/99).